The chain runs to 914 residues: Protein ECT2 (914 aa).

Ala2 carries the post-translational modification N-acetylalanine. BRCT domains follow at residues 171 to 260 (LYCT…AAVD) and 266 to 354 (FKVP…MYLY). A Phosphothreonine; by PKC/PRKCI modification is found at Thr359. Phosphoserine occurs at positions 367 and 370. Residue Thr373 is modified to Phosphothreonine; by CDK1. Ser376 is subject to Phosphoserine. 2 short sequence motifs (nuclear localization signal) span residues 378–382 (RKRRR) and 401–405 (PRKRP). The tract at residues 388-449 (AQLSRETDVS…SKSSTPVPSK (62 aa)) is disordered. Residues 418–429 (DISNTPESSINY) are compositionally biased toward polar residues. Residues 432-449 (TPKSCTKSSKSSTPVPSK) show a composition bias toward low complexity. Position 444 is a phosphothreonine; by CDK1 (Thr444). Positions 452-641 (ARWQVAKELY…KEVMTHINED (190 aa)) constitute a DH domain. Residue Lys611 forms a Glycyl lysine isopeptide (Lys-Gly) (interchain with G-Cter in SUMO2) linkage. Residues 675-794 (RVETISLGEH…KMLCRHVANT (120 aa)) enclose the PH domain. Ser716 and Ser842 each carry phosphoserine. A Phosphothreonine; by CDK1 modification is found at Thr846. A disordered region spans residues 857 to 884 (TSHGSVEGRSPSSNDKHVMSRLSSTSSL). Phosphoserine is present on residues Ser861 and Ser866.

In terms of assembly, homodimer. Homooligomer. Found in the centralspindlin complex. Interacts with NR1I3. Interacts (Thr-359 phosphorylated form) with PARD6A; the interaction is observed in cancer cells. Interacts (Thr-359 phosphorylated form) with PRKCI; the interaction is observed in cancer cells. Interacts with PKP4; the interaction is observed at the midbody. Interacts with RACGAP1/CYK4; the interaction is direct, occurs in a microtubule-dependent manner, occurs at anaphase and during cytokinesis, is inhibited in metaphase by phosphorylation of ECT2 on Thr-373 and is stimulated in early anaphase by dephosphorylation of ECT2 probably on Thr-373 through CDK1 activity. Interacts with PLK1; the interaction is stimulated upon its phosphorylation on Thr-444. Interacts with RHOA; the interaction results in allosteric activation of ECT2. Interacts with KIF23, PARD3, PARD6B and PRKCQ. Interacts with NEDD9/HEF1. Phosphorylated by PLK1 in vitro. Hyperphosphorylated during the G2 phase of the cell cycle. Phosphorylation at Thr-373 occurs during the G2/M phase, relieves its auto-inhibition status and stimulates its GEF activity. Phosphorylation at Thr-444 in G2/M phase is required for subsequent binding with PLK1 and Rho exchange activation. Dephosphorylated at the time of cytokinesis. Phosphorylation at Thr-359 is required for its transformation activity in cancer cells. In terms of tissue distribution, expressed in lung epithelial cells (at protein level). Expressed in squamous cell carcinoma, primary non-small cell lung cancer tumors and lung adenocarcinoma.

It localises to the nucleus. The protein resides in the cytoplasm. It is found in the cytoskeleton. Its subcellular location is the spindle. The protein localises to the cleavage furrow. It localises to the midbody. The protein resides in the cell junction. It is found in the tight junction. Its subcellular location is the microtubule organizing center. The protein localises to the centrosome. Its activity is regulated as follows. Autoinhibited by the C-terminal PH domain which folds back and binds to the surface of the DH domain, blocking binding of RHOA to the catalytic center of the DH domain. The 2nd BRCT domain is also involved in inhibition, probably by helping to impede RHOA binding. Allosterically activated by binding of activated GTP-bound RHOA to the PH domain which stimulates the release of PH inhibition and promotes the binding of substrate RHOA to the catalytic center. Binding of phosphorylated RACGAP1 to the N-terminal BRCT domain-containing region also releases autoinhibition. In terms of biological role, guanine nucleotide exchange factor (GEF) that catalyzes the exchange of GDP for GTP. Promotes guanine nucleotide exchange on the Rho family members of small GTPases, like RHOA, RHOC, RAC1 and CDC42. Required for signal transduction pathways involved in the regulation of cytokinesis. Component of the centralspindlin complex that serves as a microtubule-dependent and Rho-mediated signaling required for the myosin contractile ring formation during the cell cycle cytokinesis. Regulates the translocation of RHOA from the central spindle to the equatorial region. Plays a role in the control of mitotic spindle assembly; regulates the activation of CDC42 in metaphase for the process of spindle fibers attachment to kinetochores before chromosome congression. Involved in the regulation of epithelial cell polarity; participates in the formation of epithelial tight junctions in a polarity complex PARD3-PARD6-protein kinase PRKCQ-dependent manner. Plays a role in the regulation of neurite outgrowth. Inhibits phenobarbital (PB)-induced NR1I3 nuclear translocation. Stimulates the activity of RAC1 through its association with the oncogenic PARD6A-PRKCI complex in cancer cells, thereby acting to coordinately drive tumor cell proliferation and invasion. Also stimulates genotoxic stress-induced RHOB activity in breast cancer cells leading to their cell death. This is Protein ECT2 from Homo sapiens (Human).